Reading from the N-terminus, the 1377-residue chain is MAQTHSFNGRKRVRKFFGKIPEVAEMPNLIEVQKASYDQFLMVEEPSGGRPDEGLQAVFKSVFPIQDFSGASMLEFVRYEFDPPKFDVDECRQRDLTYSAPLKVTLRLIVFDIDEDTGAKSIKDIKEQDVYMGDMPLMTDNGTFIVNGTERVIVSQMHRSPGVFFDHDKGKTHSSGKLLFAARVIPYRGSWLDIEFDSKDIVYARIDRRRKLPATTLLMALGMDGEEILSTFYKTVTYTRDGDNWRIPYSAERFKGMKIISDLVDADTGEVVLEAGKKLTARAAKQLAEKGLKAIKATEDDLFGSYLAEDVVNYATGEIYLEAGDEIDEKVLKTLIDTGETEINVLDIDHVNIGAYIRNTLAVDKNESRQEALFDIYRVMRPGEPPTMDSAEAMFHSLFFDSERYDLSAVGRVKMNMRLDLDAEDTVRVLRKEDILAVVKMLVELRDGRGEIDDIDNLGNRRVRSVGELMENQYRVGLLRMERAIKERMSSIEIDTVMPQDLINAKPAAAAVREFFGSSQLSQFMDQTNPLSEITHKRRLSALGPGGLTRERAGFEVRDVHPTHYGRICPIETPEGPNIGLINSLATFARVNKYGFIESPYRKVVDGKVTNDVVYLSAMEEAKHSVAQVNVELDEQGGFVDEFVICRHAGEVMMAPRENVDLMDVSPKQLVSVAAALIPFLENDDANRALMGSNMQRQAVPLVRAEAPFVGTGMEPIVARDSGAAIAARRGGIVDQVDATRIVIRATEELDPSKSGVDIYRLQKFQRSNQSTCINQRPLVRVGDRIHKGDIIADGPSTDLGDLALGRNVLVAFMPWNGYNYEDSILLSEKIVSDDVFTSIHIEEFEVAARDTKLGPEEITRDIPNVSEEALKNLDEAGIVYIGAEVHPGDILVGKITPKGESPMTPEEKLLRAIFGEKASDVRDTSMRMPPGTYGTVVEVRVFNRHGVEKDERAMAIEREEIERLAKDRDDEQAILDRNVYGRLVDMIDGKVAAAGPKGFKKGTTITRELMTEYPRSQWWQFAVEDEKLQGELEALRSQYDDSKKLLEARFMDKVEKVQRGDEMPPGVMKMVKVFVAVKRKIQPGDKMAGRHGNKGVVSRILPVEDMPFLEDGTHADIVLNPLGVPSRMNVGQILETHLGWACAGMGKKIGELLDVYRKTANIEPLRQTLEHIYPDNDRNEPVRSYDDDAILMLANQVKRGVSIATPVFDGAVEADINAMLTDAGLATSGQSTLYDGRTGEPFDRQVTMGYIYMLKLHHLVDDKIHARSIGPYSLVTQQPLGGKAQFGGQRFGEMEVWALEAYGAAYTLQEMLTVKSDDVAGRTKVYEAIVRGDDTFEAGIPESFNVLVKEMRSLGLNVELDDTREAEQPALPDAAE.

This sequence belongs to the RNA polymerase beta chain family. In terms of assembly, the RNAP catalytic core consists of 2 alpha, 1 beta, 1 beta' and 1 omega subunit. When a sigma factor is associated with the core the holoenzyme is formed, which can initiate transcription.

The catalysed reaction is RNA(n) + a ribonucleoside 5'-triphosphate = RNA(n+1) + diphosphate. DNA-dependent RNA polymerase catalyzes the transcription of DNA into RNA using the four ribonucleoside triphosphates as substrates. The sequence is that of DNA-directed RNA polymerase subunit beta from Brucella melitensis biotype 2 (strain ATCC 23457).